A 279-amino-acid polypeptide reads, in one-letter code: uncharacterized protein (279 aa).

The protein to M.tuberculosis Rv2569c.

This is an uncharacterized protein from Mycobacterium leprae (strain TN).